The primary structure comprises 154 residues: MLDIFIDADACPVKEETFRVALRYDLRVFLVANAPLRLPPQGRVELVVVPGSFDAADDWIAERIDQGDIAVTSDIPLAKRCLDKGARVVPPNGRQFTPANIGAALASRALMQDLREMARADGTALRGNAPFSAQDRSRFLQELDTVINAVRRGR.

Belongs to the UPF0178 family.

In Rhodospirillum centenum (strain ATCC 51521 / SW), this protein is UPF0178 protein RC1_2062.